Consider the following 59-residue polypeptide: UPF0434 protein Sputw3181_2540 (59 aa).

The protein belongs to the UPF0434 family.

The chain is UPF0434 protein Sputw3181_2540 from Shewanella sp. (strain W3-18-1).